We begin with the raw amino-acid sequence, 351 residues long: Protein RecA (351 aa).

68–75 (GPESSGKT) contacts ATP.

This sequence belongs to the RecA family.

It localises to the cytoplasm. Its function is as follows. Can catalyze the hydrolysis of ATP in the presence of single-stranded DNA, the ATP-dependent uptake of single-stranded DNA by duplex DNA, and the ATP-dependent hybridization of homologous single-stranded DNAs. It interacts with LexA causing its activation and leading to its autocatalytic cleavage. This is Protein RecA from Chloroflexus aurantiacus (strain ATCC 29364 / DSM 637 / Y-400-fl).